We begin with the raw amino-acid sequence, 244 residues long: 1-(5-phosphoribosyl)-5-[(5-phosphoribosylamino)methylideneamino] imidazole-4-carboxamide isomerase (244 aa).

Residue aspartate 8 is the Proton acceptor of the active site. Aspartate 129 functions as the Proton donor in the catalytic mechanism.

Belongs to the HisA/HisF family.

The protein resides in the cytoplasm. The enzyme catalyses 1-(5-phospho-beta-D-ribosyl)-5-[(5-phospho-beta-D-ribosylamino)methylideneamino]imidazole-4-carboxamide = 5-[(5-phospho-1-deoxy-D-ribulos-1-ylimino)methylamino]-1-(5-phospho-beta-D-ribosyl)imidazole-4-carboxamide. It participates in amino-acid biosynthesis; L-histidine biosynthesis; L-histidine from 5-phospho-alpha-D-ribose 1-diphosphate: step 4/9. This is 1-(5-phosphoribosyl)-5-[(5-phosphoribosylamino)methylideneamino] imidazole-4-carboxamide isomerase from Geobacter sulfurreducens (strain ATCC 51573 / DSM 12127 / PCA).